Here is a 527-residue protein sequence, read N- to C-terminus: GMP synthase [glutamine-hydrolyzing] (527 aa).

In terms of domain architecture, Glutamine amidotransferase type-1 spans 4–202 (KILILDFGSQ…VLKICGAQPD (199 aa)). Cys81 acts as the Nucleophile in catalysis. Active-site residues include His176 and Glu178. A GMPS ATP-PPase domain is found at 203-395 (WEMGHYIDEA…LGLPPAMVYR (193 aa)). 230–236 (SGGVDSS) is a binding site for ATP.

Homodimer.

It carries out the reaction XMP + L-glutamine + ATP + H2O = GMP + L-glutamate + AMP + diphosphate + 2 H(+). It participates in purine metabolism; GMP biosynthesis; GMP from XMP (L-Gln route): step 1/1. In terms of biological role, catalyzes the synthesis of GMP from XMP. The sequence is that of GMP synthase [glutamine-hydrolyzing] from Paraburkholderia xenovorans (strain LB400).